Reading from the N-terminus, the 363-residue chain is AA9 family lytic polysaccharide monooxygenase I (363 aa).

Residues 1 to 19 (MSLFKFAAFVLGTAGSVAG) form the signal peptide. H20 and H105 together coordinate Cu(2+). 2 cysteine pairs are disulfide-bonded: C75–C197 and C116–C120. Residues H183 and Q192 each contribute to the O2 site. Cu(2+) is bound at residue Y194. Over residues 248 to 257 (GSDSNTATSG) the composition is skewed to polar residues. Disordered stretches follow at residues 248 to 270 (GSDSNTATSGASPPSTNFSPTTT) and 298 to 363 (SVSY…RTQS). The span at 258–270 (ASPPSTNFSPTTT) shows a compositional bias: low complexity. Residues 298 to 307 (SVSYSQTPWP) are compositionally biased toward polar residues. The segment covering 308-329 (SSTATEATSASSSAGGSNNGHT) has biased composition (low complexity). Residues 342-354 (TGKKRSRLNRRRM) are compositionally biased toward basic residues.

The protein belongs to the polysaccharide monooxygenase AA9 family. It depends on Cu(2+) as a cofactor.

The protein localises to the secreted. The catalysed reaction is [(1-&gt;4)-beta-D-glucosyl]n+m + reduced acceptor + O2 = 4-dehydro-beta-D-glucosyl-[(1-&gt;4)-beta-D-glucosyl]n-1 + [(1-&gt;4)-beta-D-glucosyl]m + acceptor + H2O.. In terms of biological role, lytic polysaccharide monooxygenase (LPMO) that depolymerizes crystalline and amorphous polysaccharides via the oxidation of scissile alpha- or beta-(1-4)-glycosidic bonds, yielding C1 or C4 oxidation products. Catalysis by LPMOs requires the reduction of the active-site copper from Cu(II) to Cu(I) by a reducing agent and H(2)O(2) or O(2) as a cosubstrate. In Emericella nidulans (strain FGSC A4 / ATCC 38163 / CBS 112.46 / NRRL 194 / M139) (Aspergillus nidulans), this protein is AA9 family lytic polysaccharide monooxygenase I.